The sequence spans 799 residues: Zinc finger protein 227 (799 aa).

Residues 23–94 enclose the KRAB domain; it reads VTFKDVAVVF…ETETQRSSKH (72 aa). 19 C2H2-type zinc fingers span residues 250-272, 269-291, 324-346, 352-374, 380-402, 408-430, 436-458, 464-486, 492-514, 520-542, 548-570, 576-598, 604-626, 632-654, 660-682, 688-710, 716-738, 744-766, and 772-794; these read HPCG…PNVH, PNVH…QRIH, YRCD…YRTH, YKCE…QRVH, YKCD…RRVH, YKCE…FRVH, YKCK…QNVH, FKCE…QRVH, YRCD…QVIH, YKCG…QRVH, YKCD…QRGH, HICE…LGVH, and YKCD…QKVH.

It belongs to the krueppel C2H2-type zinc-finger protein family.

It is found in the nucleus. Its function is as follows. May be involved in transcriptional regulation. This Homo sapiens (Human) protein is Zinc finger protein 227 (ZNF227).